The chain runs to 270 residues: MRTKNVCTFQLILFPKVRSYIPLPLILKRIEITKNCISTRGETTKTSVTEKLSEEKTVVVEPVFGFLKAHFHSTRFSEEATKRRKRKWALLVVILRKYTARNSKQKRTKKTRQKGVRSSFIDERTPFSFIFWLVLFRPLFNVLPCSAQSLFVQEFFITSPCLVCPAFPLEQNVSAFAPSTNGTKTKQMITITPMIRFIVVQLLTLRFSYRTVKGISPLRRRAWFFLWFNRSKCFCVGSIHKRNKNKADKQYQTEYSFHCCSTPIIFILVR.

The catalysed reaction is Endonucleolytic cleavage of DNA to give specific double-stranded fragments with terminal 5'-phosphates.. Its function is as follows. A P subtype restriction enzyme that recognizes the double-stranded sequence 5'-GATATC-3' and cleaves after T-3. In Rhodococcus hoagii (Corynebacterium equii), this protein is Type II restriction enzyme CeqI (ceqIR).